Reading from the N-terminus, the 278-residue chain is Pantothenate synthetase (278 aa).

Residue 26–33 coordinates ATP; it reads MGNLHEGH. The active-site Proton donor is H33. Q57 serves as a coordination point for (R)-pantoate. Q57 provides a ligand contact to beta-alanine. 144 to 147 is a binding site for ATP; the sequence is GKKD. Q150 provides a ligand contact to (R)-pantoate. ATP contacts are provided by residues G173 and 181–184; that span reads LSSR.

The protein belongs to the pantothenate synthetase family. In terms of assembly, homodimer.

Its subcellular location is the cytoplasm. It carries out the reaction (R)-pantoate + beta-alanine + ATP = (R)-pantothenate + AMP + diphosphate + H(+). It functions in the pathway cofactor biosynthesis; (R)-pantothenate biosynthesis; (R)-pantothenate from (R)-pantoate and beta-alanine: step 1/1. Functionally, catalyzes the condensation of pantoate with beta-alanine in an ATP-dependent reaction via a pantoyl-adenylate intermediate. This chain is Pantothenate synthetase, found in Neisseria meningitidis serogroup A / serotype 4A (strain DSM 15465 / Z2491).